The primary structure comprises 501 residues: ATP synthase subunit alpha (501 aa).

169-176 (GDRQTGKT) is an ATP binding site.

It belongs to the ATPase alpha/beta chains family. F-type ATPases have 2 components, CF(1) - the catalytic core - and CF(0) - the membrane proton channel. CF(1) has five subunits: alpha(3), beta(3), gamma(1), delta(1), epsilon(1). CF(0) has three main subunits: a(1), b(2) and c(9-12). The alpha and beta chains form an alternating ring which encloses part of the gamma chain. CF(1) is attached to CF(0) by a central stalk formed by the gamma and epsilon chains, while a peripheral stalk is formed by the delta and b chains.

The protein resides in the cell membrane. It catalyses the reaction ATP + H2O + 4 H(+)(in) = ADP + phosphate + 5 H(+)(out). In terms of biological role, produces ATP from ADP in the presence of a proton gradient across the membrane. The alpha chain is a regulatory subunit. In Streptococcus equi subsp. equi (strain 4047), this protein is ATP synthase subunit alpha.